Reading from the N-terminus, the 373-residue chain is Peptide chain release factor subunit 1 (373 aa).

The protein belongs to the eukaryotic release factor 1 family. Heterodimer of two subunits, one of which binds GTP.

The protein resides in the cytoplasm. Directs the termination of nascent peptide synthesis (translation) in response to the termination codons UAA, UAG and UGA. The protein is Peptide chain release factor subunit 1 (prf1) of Aeropyrum pernix (strain ATCC 700893 / DSM 11879 / JCM 9820 / NBRC 100138 / K1).